The sequence spans 490 residues: Trigger factor (490 aa).

One can recognise a PPIase FKBP-type domain in the interval 162-243 (GDFVSIDLSA…VGSIKERELP (82 aa)). Residues 433–490 (VDAVLGPRRGGADEAGAEAEAAEEKPAKAKKSADSEKTDKSEKAEKKSKKKSKDDDAE) are disordered. Basic and acidic residues predominate over residues 454–477 (AEEKPAKAKKSADSEKTDKSEKAE).

The protein belongs to the FKBP-type PPIase family. Tig subfamily.

The protein localises to the cytoplasm. It catalyses the reaction [protein]-peptidylproline (omega=180) = [protein]-peptidylproline (omega=0). Its function is as follows. Involved in protein export. Acts as a chaperone by maintaining the newly synthesized protein in an open conformation. Functions as a peptidyl-prolyl cis-trans isomerase. The chain is Trigger factor from Mycobacteroides abscessus (strain ATCC 19977 / DSM 44196 / CCUG 20993 / CIP 104536 / JCM 13569 / NCTC 13031 / TMC 1543 / L948) (Mycobacterium abscessus).